The primary structure comprises 124 residues: Small ribosomal subunit protein uS13 (124 aa).

The tract at residues 99 to 124 (PCRGQKTKTNARTCKGPKKTVANKKK) is disordered. Basic residues predominate over residues 113 to 124 (KGPKKTVANKKK).

This sequence belongs to the universal ribosomal protein uS13 family. In terms of assembly, part of the 30S ribosomal subunit. Forms a loose heterodimer with protein S19. Forms two bridges to the 50S subunit in the 70S ribosome.

Functionally, located at the top of the head of the 30S subunit, it contacts several helices of the 16S rRNA. In the 70S ribosome it contacts the 23S rRNA (bridge B1a) and protein L5 of the 50S subunit (bridge B1b), connecting the 2 subunits; these bridges are implicated in subunit movement. Contacts the tRNAs in the A and P-sites. The protein is Small ribosomal subunit protein uS13 of Lachnospira eligens (strain ATCC 27750 / DSM 3376 / VPI C15-48 / C15-B4) (Eubacterium eligens).